The following is a 427-amino-acid chain: Transcobalamin-2 (427 aa).

Positions 1–18 are cleaved as a signal peptide; that stretch reads MRHLGALLFLLGVLGALA. 3 disulfide bridges follow: Cys21–Cys267, Cys116–Cys309, and Cys165–Cys205. Cob(II)alamin-binding positions include Gln104, 152-156, His190, 190-194, Asn242, Ser245, Gln291, and 395-397; these read TSYYQ, HHSVD, and WQL.

Belongs to the eukaryotic cobalamin transport proteins family. Interacts with CD320 (via LDL-receptor class A domains).

The protein localises to the secreted. Primary vitamin B12-binding and transport protein. Delivers cobalamin to cells. This chain is Transcobalamin-2 (TCN2), found in Pongo abelii (Sumatran orangutan).